A 62-amino-acid polypeptide reads, in one-letter code: Large ribosomal subunit protein bL32m (62 aa).

This sequence belongs to the bacterial ribosomal protein bL32 family.

It localises to the mitochondrion. The sequence is that of Large ribosomal subunit protein bL32m (RPL32) from Reclinomonas americana.